The primary structure comprises 222 residues: 3-dehydroquinate dehydratase (222 aa).

3-dehydroquinate contacts are provided by residues 29–31 (ELR) and arginine 55. Histidine 112 functions as the Proton donor/acceptor in the catalytic mechanism. The active-site Schiff-base intermediate with substrate is the lysine 139. Residues arginine 178, serine 199, and glutamine 203 each coordinate 3-dehydroquinate.

It belongs to the type-I 3-dehydroquinase family. As to quaternary structure, homodimer.

The enzyme catalyses 3-dehydroquinate = 3-dehydroshikimate + H2O. It participates in metabolic intermediate biosynthesis; chorismate biosynthesis; chorismate from D-erythrose 4-phosphate and phosphoenolpyruvate: step 3/7. Its function is as follows. Involved in the third step of the chorismate pathway, which leads to the biosynthesis of aromatic amino acids. Catalyzes the cis-dehydration of 3-dehydroquinate (DHQ) and introduces the first double bond of the aromatic ring to yield 3-dehydroshikimate. The protein is 3-dehydroquinate dehydratase of Dehalococcoides mccartyi (strain ATCC BAA-2100 / JCM 16839 / KCTC 5957 / BAV1).